Reading from the N-terminus, the 360-residue chain is MDELLEKLLNDLKKKEPKACSIICIGEDLDIIQCMNEHGCFSGGSYSELSNDCETVNFRGIAYKCFFTKDQVKVNFWQISHLTGGLFNFLVSQALNEHGLDLLWIIMVVAQTLSALVSFPEKLLNILRNMKTILINTEETVRNRFEESQNKKLVALLDKNSTTLDISSGILLNFTVVLKQLKHALGLHTSVDNSQEFILQFLRTTLLSVPTSSIVSISADPTSWNNLNVLMKYNFMFQKFKPRDFHAQTIQSETMFIPPCWDTISKIQSVNHEFNIALFKQTAKNFYDTLDISLLLGLFDKSISMLNCHSSKISDGDIPYKSHQVFLQELQNKYSEIKTYSSNKLNKSSIKSSLWKDLIQ.

It belongs to the dynein light intermediate chain DYN3 family. As to quaternary structure, the dynein complex consists of at least two heavy chains and a number of intermediate and light chains. Interacts with rga3, sec10, sec16, syp1, rvb2, spbc19c7.04c, spbc2f12.05 and spac3a11.10c. The N-terminal part is acetylated.

It is found in the cytoplasm. Its subcellular location is the cytoskeleton. Component of the cytoplasmic dynein which acts as a motor for the intracellular retrograde motility of vesicles and organelles along microtubules. Promotes oscillatory nuclear movement and efficient pairing of homologous centromeres during meiotic prophase. This chain is Dynein intermediate light chain dil1 (dil1), found in Schizosaccharomyces pombe (strain 972 / ATCC 24843) (Fission yeast).